An 842-amino-acid polypeptide reads, in one-letter code: MVAFTVDQIRSLMDKVTNVRNMSVIAHVDHGKSTLTDSLVQRAGIISAAKAGEARFTDTRKDEQERGITIKSTAISLFSEMSDDDVKDIKQKTDGNAFLINLIDSPGHVDFSSEVTAALRVTDGALVVVDTVEGVCVQTETVLRQSLAERIKPVVVINKVDRALLELQVSKEDLYQSFSRTVESVNVIISTYADEVLGDVQVYPQRGTVAFGSGLHGWAFTVRQFANRYSKKFGVDREKMMDRLWGDSYFNPKTKKWTNKERDADGKPLERAFNMFVLDPIFRLFAAIMNFKKEEIPVLLEKLEINLKGDEKELEGKNLLKVVMRKFLPAADALLEMIILHLPSPVTAQNYRAEQLYEGPSDDPACIAIKNCDPKSDLMLYVSKMVPTSDKGRFYAFGRVFAGTVKSGQKVRIQGPNFIPGKKEDLFIKAIQRAVLMMGRFVEPIDDCPAGNIIGLVGIDQFLLKTGTLTTFEGAHNMKVMKFSVSPVVQVAVEVKNANDLPKLVEGLKRLSKSDPCVLVSMSESGEHIVAGTGELHLEICLQDLENDHAGIPLKISPPVVAYRETVEGESSQTALSKSPNKHNRIYLKAQPIDEEVSLAIEGGKINPRDDFKARARIMADEFGWDVTDARKIWCFGPDGNGPNLVVDQTKAVQYLNEIKDSVVAAFQWATKEGPIFGEQMRSVRVNILDVTLHADAIHRGGGQIIPTMRRATYAGFLLAEPKIQEPVFLVEIQCPEQAIGGIYSVLNKKRGQVVSEEQRPGTPLFTVKAYLPINESFGFTGELRQATGGQAFPQMVFDHWATLGTDPLDPSTKAGEIVLAARKRQGMKEEVPGWQEYYDKL.

In terms of domain architecture, tr-type G spans 17-253 (TNVRNMSVIA…LWGDSYFNPK (237 aa)). GTP is bound by residues 26–33 (AHVDHGKS), 158–161 (NKVD), and 213–215 (SGL). Histidine 699 carries the post-translational modification Diphthamide.

Belongs to the TRAFAC class translation factor GTPase superfamily. Classic translation factor GTPase family. EF-G/EF-2 subfamily.

It localises to the cytoplasm. It carries out the reaction GTP + H2O = GDP + phosphate + H(+). In terms of biological role, catalyzes the GTP-dependent ribosomal translocation step during translation elongation. During this step, the ribosome changes from the pre-translocational (PRE) to the post-translocational (POST) state as the newly formed A-site-bound peptidyl-tRNA and P-site-bound deacylated tRNA move to the P and E sites, respectively. Catalyzes the coordinated movement of the two tRNA molecules, the mRNA and conformational changes in the ribosome. The chain is Elongation factor 2 (EFT1) from Kluyveromyces lactis (strain ATCC 8585 / CBS 2359 / DSM 70799 / NBRC 1267 / NRRL Y-1140 / WM37) (Yeast).